The chain runs to 879 residues: Autophagy-related protein 9 (879 aa).

Residues 1-56 (MGKGEGYLDPTILSVASGSRNSGKGKERTRRKGGHKYHSLHVQDEEEEEPPESDAL) form a disordered region. The span at 27–39 (ERTRRKGGHKYHS) shows a compositional bias: basic residues. A helical membrane pass occupies residues 104 to 124 (VLNLLTTFFVIAFSTFLISCI). N-linked (GlcNAc...) asparagine glycosylation is found at N163 and N166. A helical transmembrane segment spans residues 180 to 200 (LFLIILSAFFIFQVASFAMSV). Residues 385–405 (FIFMGILNAIFAPFIILYLLI) lie within the membrane without spanning it. A run of 2 helical transmembrane segments spans residues 455-475 (FVAF…LIDP) and 488-508 (TVLF…GMVP). Residues 555-575 (IMIFFSELLSVILTPFILFFS) lie within the membrane without spanning it. Disordered stretches follow at residues 620–666 (ETGL…DWRG) and 763–825 (WAKS…EEER). The span at 632–657 (GPAADGFAAGKPSRPTTRRTTSSSPS) shows a compositional bias: low complexity. The span at 798–817 (EGDKGDDSIDGWSKRVKTDG) shows a compositional bias: basic and acidic residues.

Belongs to the ATG9 family. In terms of assembly, homotrimer; forms a homotrimer with a central pore that forms a path between the two membrane leaflets. Phosphorylated by ATG1. ATG1 phosphorylation is required for preautophagosome elongation.

It localises to the preautophagosomal structure membrane. Its subcellular location is the cytoplasmic vesicle membrane. It is found in the golgi apparatus membrane. The protein localises to the endoplasmic reticulum membrane. It catalyses the reaction a 1,2-diacyl-sn-glycero-3-phosphocholine(in) = a 1,2-diacyl-sn-glycero-3-phosphocholine(out). It carries out the reaction a 1,2-diacyl-sn-glycero-3-phospho-L-serine(in) = a 1,2-diacyl-sn-glycero-3-phospho-L-serine(out). The catalysed reaction is a 1,2-diacyl-sn-glycero-3-phosphoethanolamine(in) = a 1,2-diacyl-sn-glycero-3-phosphoethanolamine(out). The enzyme catalyses a 1,2-diacyl-sn-glycero-3-phospho-(1D-myo-inositol-3-phosphate)(in) = a 1,2-diacyl-sn-glycero-3-phospho-(1D-myo-inositol-3-phosphate)(out). Functionally, phospholipid scramblase involved in autophagy and cytoplasm to vacuole transport (Cvt) vesicle formation. Cycles between the preautophagosomal structure/phagophore assembly site (PAS) and the cytoplasmic vesicle pool and supplies membrane for the growing autophagosome. Lipid scramblase activity plays a key role in preautophagosomal structure/phagophore assembly by distributing the phospholipids that arrive through ATG2 from the cytoplasmic to the luminal leaflet of the bilayer, thereby driving autophagosomal membrane expansion. Required for mitophagy. Also involved in endoplasmic reticulum-specific autophagic process and is essential for the survival of cells subjected to severe ER stress. Different machineries are required for anterograde trafficking to the PAS during either the Cvt pathway or bulk autophagy and for retrograde trafficking. The sequence is that of Autophagy-related protein 9 (ATG9) from Cryptococcus neoformans var. neoformans serotype D (strain B-3501A) (Filobasidiella neoformans).